Reading from the N-terminus, the 528-residue chain is Exodeoxyribonuclease 7 large subunit (528 aa).

Positions 486-528 (QGDRDAVIDGESSGVLPPSAAPAPTRPTPRPKPASSSDQGSLF) are disordered. A compositionally biased stretch (pro residues) spans 504–517 (SAAPAPTRPTPRPK).

It belongs to the XseA family. In terms of assembly, heterooligomer composed of large and small subunits.

The protein localises to the cytoplasm. The catalysed reaction is Exonucleolytic cleavage in either 5'- to 3'- or 3'- to 5'-direction to yield nucleoside 5'-phosphates.. Functionally, bidirectionally degrades single-stranded DNA into large acid-insoluble oligonucleotides, which are then degraded further into small acid-soluble oligonucleotides. This is Exodeoxyribonuclease 7 large subunit from Caulobacter sp. (strain K31).